Consider the following 259-residue polypeptide: Putative protein phosphatase (259 aa).

Residues 8–255 enclose the PPM-type phosphatase domain; sequence LFASLSKKGP…DNITLNLINL (248 aa).

It carries out the reaction O-phospho-L-seryl-[protein] + H2O = L-seryl-[protein] + phosphate. The catalysed reaction is O-phospho-L-threonyl-[protein] + H2O = L-threonyl-[protein] + phosphate. This chain is Putative protein phosphatase, found in Mycoplasma pneumoniae (strain ATCC 29342 / M129 / Subtype 1) (Mycoplasmoides pneumoniae).